The sequence spans 325 residues: Coiled-coil domain-containing protein 160 (325 aa).

Disordered regions lie at residues 18-45 (SAQD…KGME) and 81-123 (ENKR…CSTD). Residues 81–91 (ENKRNISKNET) are compositionally biased toward basic and acidic residues. A compositionally biased stretch (polar residues) spans 92–123 (DTNSASYESSNVDVTTEESFNSTEDNSTCSTD). A coiled-coil region spans residues 144–288 (KLCLNLLNEE…SVIKNELRTE (145 aa)).

Belongs to the CCDC160 family.

The protein is Coiled-coil domain-containing protein 160 (CCDC160) of Homo sapiens (Human).